A 168-amino-acid polypeptide reads, in one-letter code: NADH-quinone oxidoreductase subunit B (168 aa).

Residues Cys49, Cys50, Cys114, and Cys144 each coordinate [4Fe-4S] cluster.

Belongs to the complex I 20 kDa subunit family. As to quaternary structure, NDH-1 is composed of 14 different subunits. Subunits NuoB, C, D, E, F, and G constitute the peripheral sector of the complex. The cofactor is [4Fe-4S] cluster.

It is found in the cell membrane. It catalyses the reaction a quinone + NADH + 5 H(+)(in) = a quinol + NAD(+) + 4 H(+)(out). In terms of biological role, NDH-1 shuttles electrons from NADH, via FMN and iron-sulfur (Fe-S) centers, to quinones in the respiratory chain. Couples the redox reaction to proton translocation (for every two electrons transferred, four hydrogen ions are translocated across the cytoplasmic membrane), and thus conserves the redox energy in a proton gradient. This Wolbachia pipientis wMel protein is NADH-quinone oxidoreductase subunit B.